A 583-amino-acid polypeptide reads, in one-letter code: Proline--tRNA ligase (583 aa).

This sequence belongs to the class-II aminoacyl-tRNA synthetase family. ProS type 1 subfamily. In terms of assembly, homodimer.

The protein localises to the cytoplasm. It carries out the reaction tRNA(Pro) + L-proline + ATP = L-prolyl-tRNA(Pro) + AMP + diphosphate. Functionally, catalyzes the attachment of proline to tRNA(Pro) in a two-step reaction: proline is first activated by ATP to form Pro-AMP and then transferred to the acceptor end of tRNA(Pro). As ProRS can inadvertently accommodate and process non-cognate amino acids such as alanine and cysteine, to avoid such errors it has two additional distinct editing activities against alanine. One activity is designated as 'pretransfer' editing and involves the tRNA(Pro)-independent hydrolysis of activated Ala-AMP. The other activity is designated 'posttransfer' editing and involves deacylation of mischarged Ala-tRNA(Pro). The misacylated Cys-tRNA(Pro) is not edited by ProRS. This is Proline--tRNA ligase from Aromatoleum aromaticum (strain DSM 19018 / LMG 30748 / EbN1) (Azoarcus sp. (strain EbN1)).